The primary structure comprises 511 residues: uncharacterized protein (511 aa).

The region spanning 13-45 (IYDALNMLVYDYLLKMKYEGSAKIFFNEAGLEN) is the LisH domain. The tract at residues 172–212 (PRFEEQGVPPAKMAPKQFRDEGRSGNVESPSIATNQEGSSP) is disordered. Positions 197 to 210 (NVESPSIATNQEGS) are enriched in polar residues.

This is an uncharacterized protein from Encephalitozoon cuniculi (strain GB-M1) (Microsporidian parasite).